A 313-amino-acid chain; its full sequence is Deoxyribonucleoside regulator (313 aa).

The H-T-H motif DNA-binding region spans 23–42 (QQQIAEQLNISRPTVSRLLQ).

Belongs to the SorC transcriptional regulatory family. As to quaternary structure, homooctamer.

Negative regulator of the dra-nupC-pdp operon. DeoR binds cooperatively to the operator DNA, which consists of a palindrome and a direct repeat sequence located 3' to the palindrome. The sequence is that of Deoxyribonucleoside regulator from Bacillus subtilis (strain 168).